We begin with the raw amino-acid sequence, 364 residues long: tRNA 2-selenouridine synthase (364 aa).

In terms of domain architecture, Rhodanese spans 14–137 (LLADTPLIDV…LRQTAIQATW (124 aa)). Catalysis depends on cysteine 97, which acts as the S-selanylcysteine intermediate.

Belongs to the SelU family. As to quaternary structure, monomer.

The enzyme catalyses 5-methylaminomethyl-2-thiouridine(34) in tRNA + selenophosphate + (2E)-geranyl diphosphate + H2O + H(+) = 5-methylaminomethyl-2-selenouridine(34) in tRNA + (2E)-thiogeraniol + phosphate + diphosphate. It catalyses the reaction 5-methylaminomethyl-2-thiouridine(34) in tRNA + (2E)-geranyl diphosphate = 5-methylaminomethyl-S-(2E)-geranyl-thiouridine(34) in tRNA + diphosphate. It carries out the reaction 5-methylaminomethyl-S-(2E)-geranyl-thiouridine(34) in tRNA + selenophosphate + H(+) = 5-methylaminomethyl-2-(Se-phospho)selenouridine(34) in tRNA + (2E)-thiogeraniol. The catalysed reaction is 5-methylaminomethyl-2-(Se-phospho)selenouridine(34) in tRNA + H2O = 5-methylaminomethyl-2-selenouridine(34) in tRNA + phosphate. Its function is as follows. Involved in the post-transcriptional modification of the uridine at the wobble position (U34) of tRNA(Lys), tRNA(Glu) and tRNA(Gln). Catalyzes the conversion of 2-thiouridine (S2U-RNA) to 2-selenouridine (Se2U-RNA). Acts in a two-step process involving geranylation of 2-thiouridine (S2U) to S-geranyl-2-thiouridine (geS2U) and subsequent selenation of the latter derivative to 2-selenouridine (Se2U) in the tRNA chain. The protein is tRNA 2-selenouridine synthase of Salmonella agona (strain SL483).